A 179-amino-acid polypeptide reads, in one-letter code: Large ribosomal subunit protein uL6 (179 aa).

It belongs to the universal ribosomal protein uL6 family. Part of the 50S ribosomal subunit.

Its function is as follows. This protein binds to the 23S rRNA, and is important in its secondary structure. It is located near the subunit interface in the base of the L7/L12 stalk, and near the tRNA binding site of the peptidyltransferase center. The sequence is that of Large ribosomal subunit protein uL6 from Clostridium acetobutylicum (strain ATCC 824 / DSM 792 / JCM 1419 / IAM 19013 / LMG 5710 / NBRC 13948 / NRRL B-527 / VKM B-1787 / 2291 / W).